We begin with the raw amino-acid sequence, 333 residues long: MFSQKTNYSHLFTFSIIFYVEIVTGILGNGFIALVNIMDWLKRRRISTADQILTALALTRLIYVWSVLICILLLFLCPHLSMRPEMFTAIGVIWVVDNHFSIWLATCLGVFYFLKIASFSNSLFLYLKWRVKKVVLMIILISLIFLMLNISSLGMYDHFSIDVYEGNMSYNLVDSTHFPRIFLFTNSSKVFLIANSSHVFLPINSLFMLIPFTVSLVAFFVLFLSLWKHHKKMQVNAKGPRDASTMAHTKALQIGFSFLLLYAIYLLFIITGILNLDLMRCIVILLFDHISGAVFSISHSFVLILGNSKLRQATLSVLPCLRCRSKDMDTVVF.

The Extracellular portion of the chain corresponds to 1 to 14 (MFSQKTNYSHLFTF). The helical transmembrane segment at 15–37 (SIIFYVEIVTGILGNGFIALVNI) threads the bilayer. At 38–57 (MDWLKRRRISTADQILTALA) the chain is on the cytoplasmic side. A helical membrane pass occupies residues 58 to 77 (LTRLIYVWSVLICILLLFLC). The Extracellular segment spans residues 78 to 91 (PHLSMRPEMFTAIG). A helical membrane pass occupies residues 92–114 (VIWVVDNHFSIWLATCLGVFYFL). Residues 115 to 133 (KIASFSNSLFLYLKWRVKK) are Cytoplasmic-facing. A helical membrane pass occupies residues 134-156 (VVLMIILISLIFLMLNISSLGMY). At 157–204 (DHFSIDVYEGNMSYNLVDSTHFPRIFLFTNSSKVFLIANSSHVFLPIN) the chain is on the extracellular side. 3 N-linked (GlcNAc...) asparagine glycosylation sites follow: asparagine 167, asparagine 186, and asparagine 195. The chain crosses the membrane as a helical span at residues 205–227 (SLFMLIPFTVSLVAFFVLFLSLW). At 228 to 250 (KHHKKMQVNAKGPRDASTMAHTK) the chain is on the cytoplasmic side. The chain crosses the membrane as a helical span at residues 251–273 (ALQIGFSFLLLYAIYLLFIITGI). Topologically, residues 274-282 (LNLDLMRCI) are extracellular. Residues 283-305 (VILLFDHISGAVFSISHSFVLIL) traverse the membrane as a helical segment. The Cytoplasmic portion of the chain corresponds to 306–333 (GNSKLRQATLSVLPCLRCRSKDMDTVVF).

This sequence belongs to the G-protein coupled receptor T2R family. Expressed in subsets of taste receptor cells of the tongue and palate epithelium and exclusively in gustducin-positive cells. Expressed in the antrum and fundus (part of the stomach), duodenum and in gastric endocrine cells.

It is found in the membrane. Functionally, gustducin-coupled receptor implicated in the perception of bitter compounds in the oral cavity and the gastrointestinal tract. Signals through PLCB2 and the calcium-regulated cation channel TRPM5. This Rattus norvegicus (Rat) protein is Taste receptor type 2 member 123 (Tas2r123).